A 171-amino-acid chain; its full sequence is MATKMAGAAMNLAKRESSSLCGKLETDIEIKASAGKFHHMFAGRPHHVSKATPGKIQGCELHEGDWGKVGSIVFWNYVHDGEAKVAKERIEAVEPEKNLITFRVIEGDLLKEYKSFVITIQVTPKRGGPGSVVHWHVEYEKIDDKVAHPETFLDFCVEVSKEIDEHLLNEE.

The protein belongs to the MLP family.

This Arabidopsis thaliana (Mouse-ear cress) protein is MLP-like protein 31 (MLP31).